An 888-amino-acid chain; its full sequence is G-protein coupled receptor family C group 6 member A (888 aa).

Residues Met1–Ser15 form the signal peptide. Residues Gln16–Ala568 are Extracellular-facing. N-linked (GlcNAc...) asparagine glycosylation is found at Asn251, Asn322, Asn532, and Asn544. A helical membrane pass occupies residues Ile569–Phe589. The Cytoplasmic portion of the chain corresponds to Thr590–Leu604. The helical transmembrane segment at Met605–Ile625 threads the bilayer. The Extracellular segment spans residues Arg626–Cys641. A helical transmembrane segment spans residues Met642–Phe662. Residues Ser663–Pro676 are Cytoplasmic-facing. A helical transmembrane segment spans residues Ile677–Ala697. Topologically, residues Pro698–Ser718 are extracellular. Residues Ile719–Cys739 form a helical membrane-spanning segment. Over Ala740 to Lys754 the chain is Cytoplasmic. Residues Phe755 to Thr775 traverse the membrane as a helical segment. Over Phe776–Tyr779 the chain is Extracellular. A helical transmembrane segment spans residues Met780–Phe800. The Cytoplasmic segment spans residues Pro801 to Ile888.

The protein belongs to the G-protein coupled receptor 3 family. In terms of assembly, homodimer; disulfide-linked.

The protein resides in the cell membrane. Functionally, receptor activated by multiple ligands, including osteocalcin (BGLAP), basic amino acids, and various cations. Activated by amino acids with a preference for basic amino acids such as L-Lys, L-Arg and L-ornithine but also by small and polar amino acids. The L-alpha amino acids respond is augmented by divalent cations Ca(2+) and Mg(2+). Seems to act through a G(q)/G(11) and G(i)-coupled pathway. Regulates testosterone production by acting as a ligand for uncarboxylated osteocalcin hormone: osteocalcin-binding at the surface of Leydig cells initiates a signaling response that promotes the expression of enzymes required for testosterone synthesis in a CREB-dependent manner. Mediates the non-genomic effects of androgens in multiple tissue. May coordinate nutritional and hormonal anabolic signals through the sensing of extracellular amino acids, osteocalcin, divalent ions and its responsiveness to anabolic steroids. This chain is G-protein coupled receptor family C group 6 member A (GPRC6A), found in Bos taurus (Bovine).